Reading from the N-terminus, the 387-residue chain is Cytochrome b (387 aa).

Transmembrane regions (helical) follow at residues Phe-32 to Met-52, Trp-76 to Leu-98, Leu-113 to Val-133, Phe-179 to Ile-199, Phe-225 to Phe-245, Leu-290 to Ile-310, Leu-325 to Ala-345, and Leu-353 to Val-373. Heme b-binding residues include His-82 and His-96. His-183 and His-197 together coordinate heme b.

The protein belongs to the cytochrome b family. In terms of assembly, the main subunits of complex b-c1 are: cytochrome b, cytochrome c1 and the Rieske protein. Heme b is required as a cofactor.

The protein localises to the mitochondrion inner membrane. Functionally, component of the ubiquinol-cytochrome c reductase complex (complex III or cytochrome b-c1 complex) that is part of the mitochondrial respiratory chain. The b-c1 complex mediates electron transfer from ubiquinol to cytochrome c. Contributes to the generation of a proton gradient across the mitochondrial membrane that is then used for ATP synthesis. The protein is Cytochrome b (cytB) of Dictyostelium citrinum (Slime mold).